Reading from the N-terminus, the 206-residue chain is Small ribosomal subunit protein uS4 (206 aa).

The region spanning 96–156 (SRLDNVVYRM…EKSKKQVRIA (61 aa)) is the S4 RNA-binding domain.

The protein belongs to the universal ribosomal protein uS4 family. Part of the 30S ribosomal subunit. Contacts protein S5. The interaction surface between S4 and S5 is involved in control of translational fidelity.

Functionally, one of the primary rRNA binding proteins, it binds directly to 16S rRNA where it nucleates assembly of the body of the 30S subunit. In terms of biological role, with S5 and S12 plays an important role in translational accuracy. This Laribacter hongkongensis (strain HLHK9) protein is Small ribosomal subunit protein uS4.